We begin with the raw amino-acid sequence, 100 residues long: UPF0473 protein LMHCC_1068 (100 aa).

It belongs to the UPF0473 family.

The sequence is that of UPF0473 protein LMHCC_1068 from Listeria monocytogenes serotype 4a (strain HCC23).